Consider the following 2113-residue polypeptide: Unconventional myosin-VIIb (2113 aa).

Positions 65–760 constitute a Myosin motor domain; that stretch reads QGVDDMIRLG…QDTVLEIRRS (696 aa). 158 to 165 contributes to the ATP binding site; sequence GESGAGKT. An actin-binding region spans residues 637-659; that stretch reads LDQLMRILTNCQPYFVRCIKPNE. IQ domains are found at residues 745 to 765, 763 to 792, 786 to 815, 809 to 838, 832 to 861, and 855 to 884; these read IFLK…ALDG, LDGA…AAVT, QRRA…GFER, ILVG…RIVQ, MRQR…AVVI, and KRRA…TGPQ. The residue at position 904 (Ser904) is a Phosphoserine. Residues 962–1578 form a mediates interaction with ANKS4B region; it reads EEEVDSLAEY…STQLLSLLAM (617 aa). Residues 989-1189 form the MyTH4 1 domain; that stretch reads HIQKPLRYPL…PTWLELQAVK (201 aa). The FERM 1 domain occupies 1194–1503; that stretch reads IPIQVILATG…GGLKERSVFA (310 aa). Thr1339 is subject to Phosphothreonine. Ser1368 carries the post-translational modification Phosphoserine. A mediates interaction with CDHR2, CDHR5 and USH1C region spans residues 1497-2113; it reads KERSVFAMAL…GFRAPAPANP (617 aa). An SH3 domain is found at 1498-1564; it reads ERSVFAMALQ…PTACLYTIPS (67 aa). 2 MyTH4 domains span residues 1641-1790 and 1790-1896; these read YSPE…KAAE and EQNV…LNVT. Ser1642 carries the phosphoserine modification. Residues 1796–2099 enclose the FERM 2 domain; sequence LHHEVYLPND…SYVQQLLNTV (304 aa).

Belongs to the TRAFAC class myosin-kinesin ATPase superfamily. Myosin family. As to quaternary structure, part of the IMAC/intermicrovillar adhesion complex/intermicrovillar tip-link complex composed of ANKS4B, MYO7B, USH1C, CDHR2 and CDHR5. Interacts with CDHR2. Interacts with CDHR5. Interacts with USH1C. Interacts with ANKS4B; requires initial interaction with USH1C. Interacts with CALML4; the interaction mediates the association of CALML4 with the IMAC/intermicrovillar adhesion complex. Expressed primarily in kidney and intestine. Detected in proximal tubule cells of the kidney and enterocytes of the intestine, specifically the distal tips of apical microvilli on these transporting epithelial cells (at protein level).

Its subcellular location is the cytoplasm. It localises to the cytoskeleton. The protein resides in the cell projection. It is found in the microvillus. Functionally, myosins are actin-based motor molecules with ATPase activity. Their highly divergent tails are presumed to bind to membranous compartments, which would be moved relative to actin filaments. As part of the intermicrovillar adhesion complex/IMAC plays a role in epithelial brush border differentiation, controlling microvilli organization and length. May link the complex to the actin core bundle of microvilli. The sequence is that of Unconventional myosin-VIIb (Myo7b) from Mus musculus (Mouse).